A 518-amino-acid chain; its full sequence is Stage V sporulation protein B (518 aa).

14 helical membrane passes run 6-26 (FLKG…LGFV), 45-65 (MAAP…PVAI), 91-111 (ITGV…PVMA), 120-140 (TLYP…SSVL), 165-185 (ISLV…YAAA), 186-206 (GAML…FVCF), 250-270 (WFFE…ATVA), 281-301 (FAMT…TALV), 326-346 (LCLL…DELM), 348-368 (VMYG…FFLL), 387-407 (AAMM…FVLA), 411-431 (SLGI…VTLL), 446-466 (IKEY…SSAI), and 478-498 (VNLA…LLVF).

The protein belongs to the polysaccharide synthase family.

It localises to the cell membrane. In terms of biological role, involved, directly or indirectly, in spore cortex biosynthesis. Affects only indirectly the expression of late sporulation genes. In Bacillus subtilis (strain 168), this protein is Stage V sporulation protein B (spoVB).